Consider the following 237-residue polypeptide: Ribosomal RNA small subunit methyltransferase G (237 aa).

S-adenosyl-L-methionine-binding positions include Gly78, Phe83, 129–130 (AE), and Arg148.

Belongs to the methyltransferase superfamily. RNA methyltransferase RsmG family.

Its subcellular location is the cytoplasm. In terms of biological role, specifically methylates the N7 position of a guanine in 16S rRNA. The polypeptide is Ribosomal RNA small subunit methyltransferase G (Streptococcus pyogenes serotype M4 (strain MGAS10750)).